The sequence spans 393 residues: NAD(P)H-quinone oxidoreductase subunit H, chloroplastic (393 aa).

This sequence belongs to the complex I 49 kDa subunit family. NDH is composed of at least 16 different subunits, 5 of which are encoded in the nucleus.

The protein resides in the plastid. It is found in the chloroplast thylakoid membrane. The enzyme catalyses a plastoquinone + NADH + (n+1) H(+)(in) = a plastoquinol + NAD(+) + n H(+)(out). It catalyses the reaction a plastoquinone + NADPH + (n+1) H(+)(in) = a plastoquinol + NADP(+) + n H(+)(out). Its function is as follows. NDH shuttles electrons from NAD(P)H:plastoquinone, via FMN and iron-sulfur (Fe-S) centers, to quinones in the photosynthetic chain and possibly in a chloroplast respiratory chain. The immediate electron acceptor for the enzyme in this species is believed to be plastoquinone. Couples the redox reaction to proton translocation, and thus conserves the redox energy in a proton gradient. This chain is NAD(P)H-quinone oxidoreductase subunit H, chloroplastic, found in Nandina domestica (Heavenly bamboo).